Here is a 1122-residue protein sequence, read N- to C-terminus: RecBCD enzyme subunit RecC (1122 aa).

Belongs to the RecC family. Heterotrimer of RecB, RecC and RecD. All subunits contribute to DNA-binding. Interacts with YgbT (Cas1). In terms of assembly, (Microbial infection) Lambda virus GamS protein interacts with the enzyme without displacing any of the subunits.

With respect to regulation, after reacting with DNA bearing a Chi site the holoenzyme is disassembled and loses exonuclease activity, DNA unwinding and Chi-directed DNA cleavage; RecB remains complexed with ssDNA, which may prevent holoenzyme reassembly. High levels of Mg(2+) (13 mM MgCl(2+)) or incubation with DNase allow holoenzyme reassembly, suggesting it is DNA bound to RecB that prevents reassembly. Its activity is regulated as follows. (Microbial infection) RecBCD is inhibited by the lambda virus gam protein (both GamL and GamS isoforms); in vitro a short preincubation prior to adding DNA results in maximal inhibition. In terms of biological role, a helicase/nuclease that prepares dsDNA breaks (DSB) for recombinational DNA repair. Binds to DSBs and unwinds DNA via a rapid (&gt;1 kb/second) and highly processive (&gt;30 kb) ATP-dependent bidirectional helicase. Unwinds dsDNA until it encounters a Chi (crossover hotspot instigator, 5'-GCTGGTGG-3') sequence from the 3' direction. Cuts ssDNA a few nucleotides 3' to Chi site, by nicking one strand or switching the strand degraded (depending on the reaction conditions). The properties and activities of the enzyme are changed at Chi. The Chi-altered holoenzyme produces a long 3'-ssDNA overhang which facilitates RecA-binding to the ssDNA for homologous DNA recombination and repair. Holoenzyme degrades any linearized DNA that is unable to undergo homologous recombination. In the holoenzyme this subunit almost certainly recognizes the wild-type Chi sequence, when added to isolated RecB increases its ATP-dependent helicase processivity. The RecBC complex requires the RecD subunit for nuclease activity, but can translocate along ssDNA in both directions. The RecBCD complex does not unwind G-quadruplex DNA. The protein is RecBCD enzyme subunit RecC of Escherichia coli (strain K12).